We begin with the raw amino-acid sequence, 251 residues long: Glucosamine-6-phosphate deaminase (251 aa).

Asp67 serves as the catalytic Proton acceptor; for enolization step. Asn136 functions as the For ring-opening step in the catalytic mechanism. His138 acts as the Proton acceptor; for ring-opening step in catalysis. Glu143 functions as the For ring-opening step in the catalytic mechanism.

The protein belongs to the glucosamine/galactosamine-6-phosphate isomerase family. NagB subfamily.

It catalyses the reaction alpha-D-glucosamine 6-phosphate + H2O = beta-D-fructose 6-phosphate + NH4(+). Its pathway is amino-sugar metabolism; N-acetylneuraminate degradation; D-fructose 6-phosphate from N-acetylneuraminate: step 5/5. Functionally, catalyzes the reversible isomerization-deamination of glucosamine 6-phosphate (GlcN6P) to form fructose 6-phosphate (Fru6P) and ammonium ion. This chain is Glucosamine-6-phosphate deaminase, found in Geobacillus sp. (strain WCH70).